Reading from the N-terminus, the 313-residue chain is Protein EMSY-LIKE 2 (313 aa).

Positions 1–88 (MEAQIHILEQ…HQSLDVHPSP (88 aa)) constitute an ENT domain. A coiled-coil region spans residues 35-58 (MTNLRKELRISDDENRQLLNNVHN). Disordered stretches follow at residues 84-106 (VHPSPTFSASRKKQKTFQSYPSI) and 195-229 (LNVGHGGGTTRGNRRTLSHGGRGRGPRTQPRREHL). Basic residues predominate over residues 206 to 219 (GNRRTLSHGGRGRG). Residues 267-293 (HELDKAKKLLKEHEQALIAAIARLTDA) adopt a coiled-coil conformation. Serine 294 carries the phosphoserine modification. Residues 294 to 313 (SDYESDGEEPYSHELPMLLG) are disordered.

Interacts with EDM2 in nucleus.

The protein localises to the nucleus. Functionally, probably involved in the regulation of chromatin states. Contributes to RPP7-mediated and basal immunity, especially against Hyaloperonospora arabidopsidis isolate Hiks1. Regulates negatively EDM2-dependent floral transition. The protein is Protein EMSY-LIKE 2 of Arabidopsis thaliana (Mouse-ear cress).